A 518-amino-acid chain; its full sequence is Cytokinin hydroxylase (518 aa).

The chain crosses the membrane as a helical span at residues 1–21 (MLLTILKSLLVIFVTTILRVL). Cysteine 464 is a heme binding site.

This sequence belongs to the cytochrome P450 family. The cofactor is heme. As to expression, expressed in roots and flowers.

The protein resides in the membrane. The enzyme catalyses N(6)-(dimethylallyl)adenosine 5'-phosphate + NADPH + O2 + H(+) = 9-ribosyl-trans-zeatin 5'-phosphate + NADP(+) + H2O. It carries out the reaction N(6)-(dimethylallyl)adenosine 5'-diphosphate + NADPH + O2 + H(+) = 9-ribosyl-trans-zeatin 5'-diphosphate + NADP(+) + H2O. It catalyses the reaction N(6)-(dimethylallyl)adenosine 5'-triphosphate + NADPH + O2 + H(+) = 9-ribosyl-trans-zeatin 5'-triphosphate + NADP(+) + H2O. Its function is as follows. Cytokinin hydroxylase that catalyzes the biosynthesis of trans-zeatin via the isopentenyladenine riboside 5'-monophosphate (iPRMP)-dependent pathway. Can use isopentenyladenosine-5'-monophosphate, isopentenyladenosine-5'-diphosphate and isopentenyladenosine-5'-triphosphate as substrate. In Arabidopsis thaliana (Mouse-ear cress), this protein is Cytokinin hydroxylase (CYP735A1).